The following is a 142-amino-acid chain: Transcriptional regulator MraZ (142 aa).

2 consecutive SpoVT-AbrB domains span residues 5 to 51 (ASAL…PRPE) and 77 to 120 (AADV…DAAT).

The protein belongs to the MraZ family. In terms of assembly, forms oligomers.

The protein localises to the cytoplasm. The protein resides in the nucleoid. The sequence is that of Transcriptional regulator MraZ from Cupriavidus pinatubonensis (strain JMP 134 / LMG 1197) (Cupriavidus necator (strain JMP 134)).